The primary structure comprises 399 residues: Elongation factor Tu (399 aa).

Residues 10 to 209 enclose the tr-type G domain; the sequence is KPHVNIGTIG…DVDEYIPTPV (200 aa). The tract at residues 19-26 is G1; it reads GHVDHGKT. 19–26 serves as a coordination point for GTP; that stretch reads GHVDHGKT. Threonine 26 is a Mg(2+) binding site. The G2 stretch occupies residues 62-66; sequence GITIN. Residues 83–86 are G3; that stretch reads DCPG. GTP contacts are provided by residues 83 to 87 and 138 to 141; these read DCPGH and NKCD. The interval 138–141 is G4; that stretch reads NKCD. The interval 175–177 is G5; that stretch reads SAY.

It belongs to the TRAFAC class translation factor GTPase superfamily. Classic translation factor GTPase family. EF-Tu/EF-1A subfamily. As to quaternary structure, monomer.

The protein resides in the cytoplasm. The catalysed reaction is GTP + H2O = GDP + phosphate + H(+). Its function is as follows. GTP hydrolase that promotes the GTP-dependent binding of aminoacyl-tRNA to the A-site of ribosomes during protein biosynthesis. In Bifidobacterium animalis subsp. lactis (strain AD011), this protein is Elongation factor Tu.